Consider the following 128-residue polypeptide: Probable heavy metal-dependent transcriptional regulator HI_0293 (128 aa).

Residues 1–69 enclose the HTH merR-type domain; it reads MNISEAAKLV…LHQIAQLLAL (69 aa). The H-T-H motif DNA-binding region spans 4–23; that stretch reads SEAAKLVGLSTKQIRDYEKM.

It localises to the cytoplasm. Functionally, could be a copper-dependent transcriptional activator of the ATPase HI_0290. The polypeptide is Probable heavy metal-dependent transcriptional regulator HI_0293 (Haemophilus influenzae (strain ATCC 51907 / DSM 11121 / KW20 / Rd)).